Here is a 299-residue protein sequence, read N- to C-terminus: Acetyl-coenzyme A carboxylase carboxyl transferase subunit beta (299 aa).

Residues 25–294 form the CoA carboxyltransferase N-terminal domain; it reads VWTKCTSCEQ…PFVEPELIQE (270 aa). Zn(2+)-binding residues include cysteine 29, cysteine 32, cysteine 48, and cysteine 51. A C4-type zinc finger spans residues 29-51; sequence CTSCEQVLYRDELKRHLEVCPKC.

It belongs to the AccD/PCCB family. As to quaternary structure, acetyl-CoA carboxylase is a heterohexamer composed of biotin carboxyl carrier protein (AccB), biotin carboxylase (AccC) and two subunits each of ACCase subunit alpha (AccA) and ACCase subunit beta (AccD). The cofactor is Zn(2+).

The protein localises to the cytoplasm. It catalyses the reaction N(6)-carboxybiotinyl-L-lysyl-[protein] + acetyl-CoA = N(6)-biotinyl-L-lysyl-[protein] + malonyl-CoA. It functions in the pathway lipid metabolism; malonyl-CoA biosynthesis; malonyl-CoA from acetyl-CoA: step 1/1. Component of the acetyl coenzyme A carboxylase (ACC) complex. Biotin carboxylase (BC) catalyzes the carboxylation of biotin on its carrier protein (BCCP) and then the CO(2) group is transferred by the transcarboxylase to acetyl-CoA to form malonyl-CoA. The polypeptide is Acetyl-coenzyme A carboxylase carboxyl transferase subunit beta (Histophilus somni (strain 129Pt) (Haemophilus somnus)).